The sequence spans 172 residues: Acidic proline-rich protein PRP25 (172 aa).

An N-terminal signal peptide occupies residues Met-1–Ala-16. The interval Glu-22 to Pro-172 is disordered. Positions Gln-32–Pro-44 are enriched in pro residues. Positions Gly-57 to Lys-67 are enriched in low complexity. Composition is skewed to pro residues over residues Pro-68–Lys-137 and Gln-145–Pro-172.

The protein resides in the secreted. The polypeptide is Acidic proline-rich protein PRP25 (Rattus norvegicus (Rat)).